Reading from the N-terminus, the 172-residue chain is dCTP deaminase (172 aa).

Residues 97–102 (RSSFAR) and aspartate 113 contribute to the dCTP site. The Proton donor/acceptor role is filled by glutamate 123. DCTP contacts are provided by tyrosine 155 and glutamine 162.

It belongs to the dCTP deaminase family. As to quaternary structure, homotrimer.

It catalyses the reaction dCTP + H2O + H(+) = dUTP + NH4(+). It functions in the pathway pyrimidine metabolism; dUMP biosynthesis; dUMP from dCTP (dUTP route): step 1/2. In terms of biological role, catalyzes the deamination of dCTP to dUTP. This is dCTP deaminase from Metallosphaera sedula (strain ATCC 51363 / DSM 5348 / JCM 9185 / NBRC 15509 / TH2).